Consider the following 512-residue polypeptide: Glutamyl-tRNA(Gln) amidotransferase subunit A (512 aa).

Active-site charge relay system residues include lysine 82 and serine 157. The active-site Acyl-ester intermediate is serine 181.

This sequence belongs to the amidase family. GatA subfamily. As to quaternary structure, heterotrimer of A, B and C subunits.

The enzyme catalyses L-glutamyl-tRNA(Gln) + L-glutamine + ATP + H2O = L-glutaminyl-tRNA(Gln) + L-glutamate + ADP + phosphate + H(+). Allows the formation of correctly charged Gln-tRNA(Gln) through the transamidation of misacylated Glu-tRNA(Gln) in organisms which lack glutaminyl-tRNA synthetase. The reaction takes place in the presence of glutamine and ATP through an activated gamma-phospho-Glu-tRNA(Gln). The protein is Glutamyl-tRNA(Gln) amidotransferase subunit A of Bordetella petrii (strain ATCC BAA-461 / DSM 12804 / CCUG 43448).